A 233-amino-acid polypeptide reads, in one-letter code: Gamma-glutamyl-hercynylcysteine sulfoxide hydrolase (233 aa).

C2 functions as the Nucleophile in the catalytic mechanism. In terms of domain architecture, Glutamine amidotransferase type-2 spans 2 to 233 (CRHLGWLGAQ…TALDRAKGPR (232 aa)).

The enzyme catalyses gamma-L-glutamyl-hercynylcysteine S-oxide + H2O = S-(hercyn-2-yl)-L-cysteine S-oxide + L-glutamate. It participates in amino-acid biosynthesis; ergothioneine biosynthesis. Catalyzes the hydrolysis of the gamma-glutamyl amide bond of hercynyl-gamma-L-glutamyl-L-cysteine sulfoxide to produce hercynylcysteine sulfoxide, a step in the biosynthesis pathway of ergothioneine. Ergothioneine is an antioxidant that protects mycobacteria from oxidative stress. The protein is Gamma-glutamyl-hercynylcysteine sulfoxide hydrolase (egtC) of Mycobacterium tuberculosis (strain ATCC 25618 / H37Rv).